Reading from the N-terminus, the 342-residue chain is tRNA-specific 2-thiouridylase MnmA (342 aa).

Residues 6–13 (LLSGGVDS) and Leu-32 contribute to the ATP site. The active-site Nucleophile is Cys-92. Cys-92 and Cys-191 form a disulfide bridge. ATP is bound at residue Gly-116. The tract at residues 138–140 (KDQ) is interaction with tRNA. Cys-191 (cysteine persulfide intermediate) is an active-site residue. Positions 293–294 (RY) are interaction with tRNA.

This sequence belongs to the MnmA/TRMU family.

Its subcellular location is the cytoplasm. The catalysed reaction is S-sulfanyl-L-cysteinyl-[protein] + uridine(34) in tRNA + AH2 + ATP = 2-thiouridine(34) in tRNA + L-cysteinyl-[protein] + A + AMP + diphosphate + H(+). Functionally, catalyzes the 2-thiolation of uridine at the wobble position (U34) of tRNA, leading to the formation of s(2)U34. The chain is tRNA-specific 2-thiouridylase MnmA from Helicobacter pylori (strain ATCC 700392 / 26695) (Campylobacter pylori).